A 70-amino-acid polypeptide reads, in one-letter code: Protein SlyX homolog (70 aa).

A disordered region spans residues 51 to 70; that stretch reads RMREAEANRPGPTNEPPPHY.

The protein belongs to the SlyX family.

The sequence is that of Protein SlyX homolog from Nitrobacter hamburgensis (strain DSM 10229 / NCIMB 13809 / X14).